A 586-amino-acid polypeptide reads, in one-letter code: Protein HOL1 (586 aa).

Residues 1-66 (MDKYTNRDHP…NWSSWRKLAH (66 aa)) are Extracellular-facing. A helical membrane pass occupies residues 67-87 (FGLMAFITAFTAATSNDAGAA). Over 88-103 (QDSLNEIYGISYDSMN) the chain is Cytoplasmic. The helical transmembrane segment at 104-124 (TGAGVLFLGIGWSTLFLAPFA) threads the bilayer. Residues 125-130 (NLYGRK) lie on the Extracellular side of the membrane. A helical transmembrane segment spans residues 131–151 (ITYIVCTTLGLFGALWFALAK). Residues 152–189 (RTSDTIWSQLFVGISESCAEAQVQLSLSDIFFQHQLGS) lie on the Cytoplasmic side of the membrane. The chain crosses the membrane as a helical span at residues 190–210 (VLTVYIMCTSIGTFLGPLIAG). Residues 211–219 (YISAFTNFR) are Extracellular-facing. The chain crosses the membrane as a helical span at residues 220-240 (WVGWVAVIISGGLLITIIFGC). Over 241–362 (EETYFDRGQY…YFKYLKINLR (122 aa)) the chain is Cytoplasmic. Residues 363–383 (MFLFPPVWLSGMFWGIQDVFL) form a helical membrane-spanning segment. The Extracellular segment spans residues 384-413 (TFYLTTQESAYYEPPWNYSDFGVAIMNVPT). Residues 414–434 (LIGAVIGCICAGIVSDYFVLW) form a helical membrane-spanning segment. Residues 435 to 448 (MARHNRGILEAEFR) lie on the Cytoplasmic side of the membrane. The chain crosses the membrane as a helical span at residues 449-469 (LYFSIATAIIGPAGLLMFGIG). Over 470–477 (TARQWPWQ) the chain is Extracellular. Residues 478-498 (AIYVGLGFVGFAWGCSGDIAM) traverse the membrane as a helical segment. Topologically, residues 499–508 (AYLMDCYPDM) are cytoplasmic. A helical membrane pass occupies residues 509–529 (VLEGMVCTAIINNTISCIFTF). The Extracellular segment spans residues 530–544 (TCSDWLAASGTENTY). Residues 545 to 565 (IALAVINFGITAFALPMYYYG) form a helical membrane-spanning segment. Topologically, residues 566 to 586 (KRIRLWTKRWYLQSVNLRDGV) are cytoplasmic.

The protein resides in the membrane. Seems to be involved in the uptake of several cations and of histidinol. The polypeptide is Protein HOL1 (HOL1) (Saccharomyces cerevisiae (strain ATCC 204508 / S288c) (Baker's yeast)).